A 64-amino-acid polypeptide reads, in one-letter code: Large ribosomal subunit protein uL29 (64 aa).

The protein belongs to the universal ribosomal protein uL29 family.

The chain is Large ribosomal subunit protein uL29 from Burkholderia mallei (strain NCTC 10247).